Reading from the N-terminus, the 259-residue chain is MTPDLQLALELAEKAGKLTLDYFGRRSLQVFSKRDDTPVTEADRNAEELIRQGISAKFPDDGLFGEEFDEHPSGNGRRWIIDPIDGTRSFIHGVPLYGVMIALEVEGAMQLGVINFPALGELYQAERGSGAFMNGSPVQVSAIAENSASTVVFTEKEYLLDPPSNHPVDQLRIDAGLVRGWGDCYGHMLVASGRAEVAVDKIMSPWDCAAVIPIVEEAGGCCFDYRGRQSIIDGEGLVSANNAMGRNLIAAIGNGERDR.

Mg(2+) is bound by residues Glu66, Asp82, Ile84, Asp85, and Asp207. Glu66 serves as a coordination point for substrate. Substrate is bound by residues 84–87 and Asp207; that span reads IDGT.

It belongs to the inositol monophosphatase superfamily. The cofactor is Mg(2+).

The catalysed reaction is L-histidinol phosphate + H2O = L-histidinol + phosphate. Its pathway is amino-acid biosynthesis; L-histidine biosynthesis; L-histidine from 5-phospho-alpha-D-ribose 1-diphosphate: step 8/9. In terms of biological role, catalyzes the dephosphorylation of histidinol-phosphate to histidinol, the direct precursor of histidine. The sequence is that of Histidinol-phosphatase (hisN) from Chlorobaculum parvum (strain DSM 263 / NCIMB 8327) (Chlorobium vibrioforme subsp. thiosulfatophilum).